The following is a 423-amino-acid chain: Growth hormone-releasing hormone receptor (423 aa).

A signal peptide spans Met1–Gly22. Residues His23 to Arg130 lie on the Extracellular side of the membrane. 3 cysteine pairs are disulfide-bonded: Cys41/Cys64, Cys55/Cys96, and Cys78/Cys112. An N-linked (GlcNAc...) asparagine glycan is attached at Asn50. The helical transmembrane segment at Ile131–Leu151 threads the bilayer. Residues Val152 to Gln167 lie on the Cytoplasmic side of the membrane. Residues Leu168–His188 traverse the membrane as a helical segment. The Extracellular portion of the chain corresponds to Ser189–His210. The chain crosses the membrane as a helical span at residues Phe211–Leu231. Over Ala232–Arg240 the chain is Cytoplasmic. A helical transmembrane segment spans residues Ala241–Val261. Residues Gly262–Trp283 lie on the Extracellular side of the membrane. Residues Ile284–Ile304 form a helical membrane-spanning segment. At Arg305–Thr331 the chain is on the cytoplasmic side. A helical membrane pass occupies residues Leu332–Ala352. Over Gly353–Arg357 the chain is Extracellular. The chain crosses the membrane as a helical span at residues Leu358–Phe378. Topologically, residues Leu379–Cys423 are cytoplasmic.

It belongs to the G-protein coupled receptor 2 family. Pituitary gland. Also detected in the lymphocytes and thymocytes.

The protein localises to the cell membrane. Receptor for GRF, coupled to G proteins which activate adenylyl cyclase. Stimulates somatotroph cell growth, growth hormone gene transcription and growth hormone secretion. The chain is Growth hormone-releasing hormone receptor (GHRHR) from Sus scrofa (Pig).